The sequence spans 46 residues: GIFSKFGGKAIKNLFIKGAKNIGKEVGMDVIRTGIDVAGCKIKGEC.

The cysteines at positions 40 and 46 are disulfide-linked.

In terms of tissue distribution, expressed by the skin glands.

Its subcellular location is the secreted. Has antibacterial activity against the Gram-positive bacterium S.aureus ATCC 25923 (MIC=12 uM) and the Gram-negative bacterium E.coli ATCC 25726 (MIC=12 uM). The sequence is that of Esculentin-1HSa from Odorrana hosii (Hose's rock frog).